The chain runs to 351 residues: 3-dehydroquinate synthase (351 aa).

NAD(+) is bound by residues 60-65 (DGEEYK), 94-98 (GVISD), 118-119 (TT), Lys-131, Lys-140, and 158-161 (FLKT). Zn(2+) contacts are provided by Glu-173, His-239, and His-256.

Belongs to the sugar phosphate cyclases superfamily. Dehydroquinate synthase family. Requires Co(2+) as cofactor. Zn(2+) serves as cofactor. NAD(+) is required as a cofactor.

It localises to the cytoplasm. The catalysed reaction is 7-phospho-2-dehydro-3-deoxy-D-arabino-heptonate = 3-dehydroquinate + phosphate. The protein operates within metabolic intermediate biosynthesis; chorismate biosynthesis; chorismate from D-erythrose 4-phosphate and phosphoenolpyruvate: step 2/7. Its function is as follows. Catalyzes the conversion of 3-deoxy-D-arabino-heptulosonate 7-phosphate (DAHP) to dehydroquinate (DHQ). This Campylobacter jejuni subsp. jejuni serotype O:6 (strain 81116 / NCTC 11828) protein is 3-dehydroquinate synthase.